The primary structure comprises 429 residues: Adenylosuccinate synthetase (429 aa).

Residues 12–18 (GDEGKGK) and 40–42 (GHT) contribute to the GTP site. The Proton acceptor role is filled by D13. Mg(2+) is bound by residues D13 and G40. IMP is bound by residues 13 to 16 (DEGK), 38 to 41 (NAGH), T129, R143, Q223, T238, and R302. H41 serves as the catalytic Proton donor. 298–304 (TVTGRPR) contacts substrate. GTP-binding positions include R304, 330-332 (KLD), and 412-414 (STS).

The protein belongs to the adenylosuccinate synthetase family. In terms of assembly, homodimer. Mg(2+) serves as cofactor.

It localises to the cytoplasm. It carries out the reaction IMP + L-aspartate + GTP = N(6)-(1,2-dicarboxyethyl)-AMP + GDP + phosphate + 2 H(+). Its pathway is purine metabolism; AMP biosynthesis via de novo pathway; AMP from IMP: step 1/2. Its function is as follows. Plays an important role in the de novo pathway of purine nucleotide biosynthesis. Catalyzes the first committed step in the biosynthesis of AMP from IMP. The sequence is that of Adenylosuccinate synthetase from Paramagnetospirillum magneticum (strain ATCC 700264 / AMB-1) (Magnetospirillum magneticum).